The primary structure comprises 233 residues: 2,3,4,5-tetrahydropyridine-2,6-dicarboxylate N-acetyltransferase (233 aa).

This sequence belongs to the transferase hexapeptide repeat family. DapH subfamily.

The enzyme catalyses (S)-2,3,4,5-tetrahydrodipicolinate + acetyl-CoA + H2O = L-2-acetamido-6-oxoheptanedioate + CoA. Its pathway is amino-acid biosynthesis; L-lysine biosynthesis via DAP pathway; LL-2,6-diaminopimelate from (S)-tetrahydrodipicolinate (acetylase route): step 1/3. Its function is as follows. Catalyzes the transfer of an acetyl group from acetyl-CoA to tetrahydrodipicolinate. In Thermotoga sp. (strain RQ2), this protein is 2,3,4,5-tetrahydropyridine-2,6-dicarboxylate N-acetyltransferase.